The primary structure comprises 1483 residues: Ubiquitin fusion degradation protein 4 (1483 aa).

The interval 1-117 is disordered; sequence MSENNSHNLD…NNEFGSNPLH (117 aa). Positions 8 to 18 are enriched in basic and acidic residues; the sequence is NLDEHESHSEN. Residues 61-70 are compositionally biased toward acidic residues; sequence EADDGEDDDN. Phosphothreonine is present on Thr87. Residue Lys349 forms a Glycyl lysine isopeptide (Lys-Gly) (interchain with G-Cter in ubiquitin) linkage. The K-box stretch occupies residues 1007 to 1081; that stretch reads CGVKSDSFIN…LIQLWKNKSK (75 aa). In terms of domain architecture, HECT spans 1376 to 1483; it reads AEHGYTMDSS…EEGAGAFLLS (108 aa). Residue Cys1450 is the Glycyl thioester intermediate of the active site.

It belongs to the UPL family. K-HECT subfamily.

It catalyses the reaction S-ubiquitinyl-[E2 ubiquitin-conjugating enzyme]-L-cysteine + [acceptor protein]-L-lysine = [E2 ubiquitin-conjugating enzyme]-L-cysteine + N(6)-ubiquitinyl-[acceptor protein]-L-lysine.. Functionally, E3 ubiquitin-protein ligase which accepts ubiquitin from an E2 ubiquitin-conjugating enzyme in the form of a thioester and then directly transfers the ubiquitin to targeted substrates. The polypeptide is Ubiquitin fusion degradation protein 4 (UFD4) (Saccharomyces cerevisiae (strain ATCC 204508 / S288c) (Baker's yeast)).